Consider the following 297-residue polypeptide: 4-hydroxy-tetrahydrodipicolinate synthase (297 aa).

Pyruvate is bound at residue Thr-47. Tyr-136 (proton donor/acceptor) is an active-site residue. Residue Lys-165 is the Schiff-base intermediate with substrate of the active site. Position 206 (Ile-206) interacts with pyruvate.

This sequence belongs to the DapA family. As to quaternary structure, homotetramer; dimer of dimers.

The protein resides in the cytoplasm. It carries out the reaction L-aspartate 4-semialdehyde + pyruvate = (2S,4S)-4-hydroxy-2,3,4,5-tetrahydrodipicolinate + H2O + H(+). The protein operates within amino-acid biosynthesis; L-lysine biosynthesis via DAP pathway; (S)-tetrahydrodipicolinate from L-aspartate: step 3/4. Functionally, catalyzes the condensation of (S)-aspartate-beta-semialdehyde [(S)-ASA] and pyruvate to 4-hydroxy-tetrahydrodipicolinate (HTPA). The sequence is that of 4-hydroxy-tetrahydrodipicolinate synthase from Campylobacter fetus subsp. fetus (strain 82-40).